The following is a 181-amino-acid chain: Oligoribonuclease (181 aa).

In terms of domain architecture, Exonuclease spans 8–171 (LIWIDLEMTG…DDIRESVAEL (164 aa)). Tyrosine 129 is an active-site residue.

Belongs to the oligoribonuclease family. In terms of assembly, homodimer.

Its subcellular location is the cytoplasm. In terms of biological role, 3'-to-5' exoribonuclease specific for small oligoribonucleotides. The polypeptide is Oligoribonuclease (Escherichia coli O139:H28 (strain E24377A / ETEC)).